Reading from the N-terminus, the 839-residue chain is MANILRKVIENDKGELRKLEKIAKKVESYADQMASLSDRDLQGKTLEFKERYQKGETLEQLLPEAFAVVREAAKRVLGLFPYRVQIMGGIVLHNGDVPEMRTGEGKTLTATMPVYLNAIAGEGVHVITVNEYLSTRDATEMGEVYSWLGLSVGINLAAKSPAEKREAYNCDITYSTNSEVGFDYLRDNMVVRQEDMVQRPLNFALVDEVDSVLIDEARTPLIVSGAVSSETNQLYIRADMFVKTLTSVDYVIDVPTKTIGLSDSGIDKAESYFNLSNLYDIENVALTHFIDNALRANYIMLLDIDYVVSEDGEILIVDQFTGRTMEGRRFSDGLHQAIEAKEGVRIQEESKTSASITYQNMFRMYKKLAGMTGTAKTEEEEFREVYNMRIIPIPTNRPIARIDHTDLLYPTLESKFRAVVEDVKTRHAKGQPILVGTVAVETSDLISRKLVEAGIPHEVLNAKNHFKEAQIIMNAGQRGAVTIATNMAGRGTDIKLGEGVRELGGLCVIGTERHESRRIDNQLRGRSGRQGDPGESQFYLSLEDDLMRRFGSDRIKAFLDRMKLDEEDTVIKSGMLGRQVESAQKRVEGNNYDTRKQVLQYDDVMREQREIIYANRRDVITANRDLGPEIKAMIKRTIDRAVDAHARSNRKDAIDAIVTFARTSLVPEESISAKELRGLKDDQIKEKLYQRALAIYDQQLSKLRDQEAIIEFQKVLILMIVDNKWTEHIDALDQLRNAVGLRGYAQNNPVVEYQAEGFKMFQDMIGAIEFDVTRTMMKAQIHEQERERASQRATTAAPQNIQSQQSANTDDLPKVERNEACPCGSGKKFKNCHGRKSFS.

ATP contacts are provided by residues Q85, 103–107, and D493; that span reads GEGKT. Residues 780 to 790 show a composition bias toward basic and acidic residues; sequence QIHEQERERAS. The interval 780–839 is disordered; that stretch reads QIHEQERERASQRATTAAPQNIQSQQSANTDDLPKVERNEACPCGSGKKFKNCHGRKSFS. Residues 791 to 809 are compositionally biased toward polar residues; it reads QRATTAAPQNIQSQQSANT. Residues C821, C823, C832, and H833 each contribute to the Zn(2+) site. Residues 827 to 839 are compositionally biased toward basic residues; sequence KKFKNCHGRKSFS.

The protein belongs to the SecA family. Monomer and homodimer. Part of the essential Sec protein translocation apparatus which comprises SecA, SecYEG and auxiliary proteins SecDF. Other proteins may also be involved. The cofactor is Zn(2+).

It is found in the cell membrane. Its subcellular location is the cytoplasm. It carries out the reaction ATP + H2O + cellular proteinSide 1 = ADP + phosphate + cellular proteinSide 2.. Part of the Sec protein translocase complex. Interacts with the SecYEG preprotein conducting channel. Has a central role in coupling the hydrolysis of ATP to the transfer of proteins into and across the cell membrane, serving as an ATP-driven molecular motor driving the stepwise translocation of polypeptide chains across the membrane. The chain is Protein translocase subunit SecA from Streptococcus pyogenes serotype M6 (strain ATCC BAA-946 / MGAS10394).